The chain runs to 86 residues: Putative membrane protein insertion efficiency factor (86 aa).

Belongs to the UPF0161 family.

It is found in the cell inner membrane. Functionally, could be involved in insertion of integral membrane proteins into the membrane. The protein is Putative membrane protein insertion efficiency factor of Ruegeria sp. (strain TM1040) (Silicibacter sp.).